We begin with the raw amino-acid sequence, 192 residues long: Probable nicotinate-nucleotide adenylyltransferase (192 aa).

The protein belongs to the NadD family.

The enzyme catalyses nicotinate beta-D-ribonucleotide + ATP + H(+) = deamido-NAD(+) + diphosphate. It functions in the pathway cofactor biosynthesis; NAD(+) biosynthesis; deamido-NAD(+) from nicotinate D-ribonucleotide: step 1/1. In terms of biological role, catalyzes the reversible adenylation of nicotinate mononucleotide (NaMN) to nicotinic acid adenine dinucleotide (NaAD). The chain is Probable nicotinate-nucleotide adenylyltransferase from Shouchella clausii (strain KSM-K16) (Alkalihalobacillus clausii).